Reading from the N-terminus, the 230-residue chain is MRKLSRRQNENLKKIKNVVHSSLEEAITLLQDTATAKFIESVELHANLNIDTKYADQQLRTTVTLPHGIGKSMRIAVLTNEANFNEANEGGADIVGSQELIDDISQGNLNFDLLVATPDMMPKLAKLGRVLGPKGLMPSPKSGTVSTNLTETLSDFKKGKFEYKADKTGVVHVNFGKANFSKDQLMENLTSLYQSIEQNRPSGVKGKYFKSLFICTSMGPSIQLDLNTFD.

The protein belongs to the universal ribosomal protein uL1 family. As to quaternary structure, part of the 50S ribosomal subunit.

Its subcellular location is the plastid. The protein resides in the chloroplast. Functionally, binds directly to 23S rRNA. Might be involved in E site tRNA release (Potential). This is Large ribosomal subunit protein uL1c (rpl1) from Thalassiosira pseudonana (Marine diatom).